We begin with the raw amino-acid sequence, 409 residues long: L-cysteine:1D-myo-inositol 2-amino-2-deoxy-alpha-D-glucopyranoside ligase (409 aa).

Zn(2+) is bound at residue Cys-25. Residues 25–28, Thr-40, and 63–65 contribute to the L-cysteinyl-5'-AMP site; these read CGIT and NVT. Positions 27–37 match the 'HIGH' region motif; sequence ITPYDATHIGH. Positions 179–184 match the 'ERGGDP' region motif; the sequence is ERGGDP. An L-cysteinyl-5'-AMP-binding site is contributed by Trp-219. Cys-223 contributes to the Zn(2+) binding site. 241-243 provides a ligand contact to L-cysteinyl-5'-AMP; sequence GSD. His-248 contacts Zn(2+). An L-cysteinyl-5'-AMP-binding site is contributed by Val-274. The short motif at 280–284 is the 'KMSKS' region element; sequence KMSKS.

This sequence belongs to the class-I aminoacyl-tRNA synthetase family. MshC subfamily. Monomer. It depends on Zn(2+) as a cofactor.

The enzyme catalyses 1D-myo-inositol 2-amino-2-deoxy-alpha-D-glucopyranoside + L-cysteine + ATP = 1D-myo-inositol 2-(L-cysteinylamino)-2-deoxy-alpha-D-glucopyranoside + AMP + diphosphate + H(+). Functionally, catalyzes the ATP-dependent condensation of GlcN-Ins and L-cysteine to form L-Cys-GlcN-Ins. The chain is L-cysteine:1D-myo-inositol 2-amino-2-deoxy-alpha-D-glucopyranoside ligase from Clavibacter sepedonicus (Clavibacter michiganensis subsp. sepedonicus).